Here is a 342-residue protein sequence, read N- to C-terminus: Renalase (342 aa).

The signal sequence occupies residues 1-17 (MAQVLIVGAGMTGSLCA). FAD is bound by residues T12, R42, and 61-62 (QY).

The protein belongs to the renalase family. FAD is required as a cofactor. Secreted into the blood by the kidney. Highly expressed in the kidney, expressed at lower level in heart, skeletal muscle and small intestine. Its plasma concentration is markedly reduced in patients with end-stage renal disease, as compared with healthy subjects.

The protein resides in the secreted. The catalysed reaction is 1,2-dihydro-beta-NAD + O2 + H(+) = H2O2 + NAD(+). It carries out the reaction 1,2-dihydro-beta-NADP + O2 + H(+) = H2O2 + NADP(+). The enzyme catalyses 1,6-dihydro-beta-NADP + O2 + H(+) = H2O2 + NADP(+). It catalyses the reaction 1,6-dihydro-beta-NAD + O2 + H(+) = H2O2 + NAD(+). In terms of biological role, catalyzes the oxidation of the less abundant 1,2-dihydro-beta-NAD(P) and 1,6-dihydro-beta-NAD(P) to form beta-NAD(P)(+). The enzyme hormone is secreted by the kidney, and circulates in blood and modulates cardiac function and systemic blood pressure. Lowers blood pressure in vivo by decreasing cardiac contractility and heart rate and preventing a compensatory increase in peripheral vascular tone, suggesting a causal link to the increased plasma catecholamine and heightened cardiovascular risk. High concentrations of catecholamines activate plasma renalase and promotes its secretion and synthesis. In Homo sapiens (Human), this protein is Renalase (RNLS).